Consider the following 102-residue polypeptide: Large ribosomal subunit protein bL21 (102 aa).

The protein belongs to the bacterial ribosomal protein bL21 family. In terms of assembly, part of the 50S ribosomal subunit. Contacts protein L20.

Functionally, this protein binds to 23S rRNA in the presence of protein L20. The chain is Large ribosomal subunit protein bL21 from Geobacillus thermodenitrificans (strain NG80-2).